An 86-amino-acid chain; its full sequence is Putative defensin-like protein 244 (86 aa).

A signal peptide spans 1–22; the sequence is MKGIAMLLVSCLLFSFLSTNLA. Intrachain disulfides connect cysteine 28–cysteine 83, cysteine 38–cysteine 67, cysteine 48–cysteine 77, and cysteine 65–cysteine 79.

Belongs to the DEFL family.

The protein localises to the secreted. The protein is Putative defensin-like protein 244 (SCRL11) of Arabidopsis thaliana (Mouse-ear cress).